The sequence spans 353 residues: Abasic site processing protein HMCES (353 aa).

The Nucleophile role is filled by Cys-2. Cys-2 carries the post-translational modification Thiazolidine linkage to a ring-opened DNA abasic site. Residue Glu-127 is part of the active site. Residues Lys-148 and Lys-151 each participate in a glycyl lysine isopeptide (Lys-Gly) (interchain with G-Cter in SUMO2) cross-link. A Phosphoserine modification is found at Ser-160. Residues Lys-274 and Lys-275 each participate in a glycyl lysine isopeptide (Lys-Gly) (interchain with G-Cter in SUMO2) cross-link. Residues 292–353 (TKSPKKEVPD…DEPMAKKPNS (62 aa)) are disordered. A Phosphoserine modification is found at Ser-294. Basic and acidic residues predominate over residues 295–307 (PKKEVPDSPKKDA). Lys-305 is covalently cross-linked (Glycyl lysine isopeptide (Lys-Gly) (interchain with G-Cter in SUMO2)). A Phosphoserine modification is found at Ser-321. A PIP-box motif is present at residues 332–338 (SFLDRWL). Positions 336–353 (RWLKQEKEDEPMAKKPNS) are enriched in basic and acidic residues. Glycyl lysine isopeptide (Lys-Gly) (interchain with G-Cter in SUMO2) cross-links involve residues Lys-339 and Lys-342.

This sequence belongs to the SOS response-associated peptidase family. In terms of assembly, interacts (via PIP-box motif) with PCNA. As to expression, expressed in embryonic stem cells.

It localises to the chromosome. With respect to regulation, formation and reversal of DNA-protein cross-link depends on DNA context. Catalyzes formation of the thiazolidine linkage in presence of abasic sites in single-stranded DNA. Mediates the reversal of the thiazolidine cross-link in presence of double stranded DNA. Its function is as follows. Sensor of abasic sites in single-stranded DNA (ssDNA) required to preserve genome integrity by promoting error-free repair of abasic sites. Acts as an enzyme that recognizes and binds abasic sites in ssDNA at replication forks and chemically modifies the lesion by forming a covalent cross-link with DNA: forms a stable thiazolidine linkage between a ring-opened abasic site and the alpha-amino and sulfhydryl substituents of its N-terminal catalytic cysteine residue. Promotes error-free repair by protecting abasic sites from translesion synthesis (TLS) polymerases and endonucleases that are error-prone and would generate mutations and double-strand breaks. The HMCES DNA-protein cross-link is then either reversed or degraded. HMCES is able to catalyze the reversal of its thiazolidine cross-link and cycle between a cross-link and a non-cross-linked state depending on DNA context: mediates self-reversal of the thiazolidine cross-link in double stranded DNA, allowing APEX1 to initiate downstream repair of abasic sites. The HMCES DNA-protein cross-link can also be degraded by the SPRTN metalloprotease following unfolding by the BRIP1/FANCJ helicase. Has preference for ssDNA, but can also accommodate double-stranded DNA with 3' or 5' overhang (dsDNA), and dsDNA-ssDNA 3' junction. Plays a protective role during somatic hypermutation of immunoglobulin genes in B-cells: acts via its ability to form covalent cross-links with abasic sites, thereby limiting the accumulation of deletions in somatic hypermutation target regions. Also involved in class switch recombination (CSR) in B-cells independently of the formation of a DNA-protein cross-link: acts by binding and protecting ssDNA overhangs to promote DNA double-strand break repair through the microhomology-mediated alternative-end-joining (Alt-EJ) pathway. Acts as a protease: mediates autocatalytic processing of its N-terminal methionine in order to expose the catalytic cysteine. The protein is Abasic site processing protein HMCES of Mus musculus (Mouse).